The following is a 319-amino-acid chain: Putative olfactory receptor 52L2 (319 aa).

Topologically, residues 1 to 43 (MNLDSFFSFLLKSLIMALSNSSWRLPQPSFFLVGIPGLEESQH) are extracellular. Asn-20 is a glycosylation site (N-linked (GlcNAc...) asparagine). A helical membrane pass occupies residues 44-64 (WIALPLGILYLLALVGNVTIL). The Cytoplasmic portion of the chain corresponds to 65–72 (FIIWMDPS). Residues 73–93 (LHQSMYLFLSMLAAIDLVVAS) form a helical membrane-spanning segment. Residues 94-117 (STAPKALAVLLVRAQEIGYTVCLI) lie on the Extracellular side of the membrane. Cysteines 115 and 207 form a disulfide. A helical membrane pass occupies residues 118 to 138 (QMFFTHAFSSMESGVLVAMAL). Residues 139–157 (DRYVAICHPLHHSTILHPG) are Cytoplasmic-facing. The helical transmembrane segment at 158–178 (VIGHIGMVVLVRGLLLLIPFL) threads the bilayer. Residues 179-214 (ILLRKLIFCQATIIGHAYCEHMAVVKLACSETTVNR) are Extracellular-facing. A helical transmembrane segment spans residues 215-235 (AYGLTVALLVVGLDVLAIGVS). Topologically, residues 236–255 (YAHILQAVLKVPGNEARLKA) are cytoplasmic. Residues 256–276 (FSTCGSHVCVILVFYIPGMFS) traverse the membrane as a helical segment. Residues 277-291 (FLTHRFGHHVPHHVH) are Extracellular-facing. Residues 292–312 (VLLAILYRLVPPALNPLVYRV) traverse the membrane as a helical segment. Residues 313–319 (KTQKIHQ) are Cytoplasmic-facing.

Belongs to the G-protein coupled receptor 1 family.

It localises to the cell membrane. Its function is as follows. Odorant receptor. The protein is Putative olfactory receptor 52L2 (OR52L2P) of Homo sapiens (Human).